A 105-amino-acid polypeptide reads, in one-letter code: 5,5'-dehydrodivanillate O-demethylase ferredoxin subunit (105 aa).

The region spanning 2 to 105 (AQLKVVTRDG…GMTVTIAPED (104 aa)) is the 2Fe-2S ferredoxin-type domain. [2Fe-2S] cluster is bound by residues cysteine 40, cysteine 46, cysteine 49, and cysteine 86.

Belongs to the adrenodoxin/putidaredoxin family. Monomer. The three-component monooxygenase is composed of an oxygenase (LigXa), a ferredoxin (LigXc) and a ferredoxin reductase (LigXd). [2Fe-2S] cluster serves as cofactor.

The catalysed reaction is 5,5'-dehydrodivanillate + NADH + O2 + H(+) = 2,2',3-trihydroxy-3'-methoxy-5,5'-dicarboxybiphenyl + formaldehyde + NAD(+) + H2O. Involved in the catabolism of 5,5'-dehydrodivanillate (DDVA), an intermediate in the biodegradation of lignin. Part of a three-component monooxygenase that catalyzes the O-demethylation of DDVA, leading to the formation of 2,2',3-trihydroxy-3'-methoxy-5,5'-dicarboxybiphenyl (OH-DDVA). LigXc probably functions as an intermediate electron transfer protein between LigXd and LigXa. The protein is 5,5'-dehydrodivanillate O-demethylase ferredoxin subunit of Sphingobium sp. (strain NBRC 103272 / SYK-6).